A 168-amino-acid chain; its full sequence is UPF0178 protein RBAM_023530 (168 aa).

The protein belongs to the UPF0178 family.

The chain is UPF0178 protein RBAM_023530 from Bacillus velezensis (strain DSM 23117 / BGSC 10A6 / LMG 26770 / FZB42) (Bacillus amyloliquefaciens subsp. plantarum).